The following is a 520-amino-acid chain: MLIERGLLSIMASKCSGTWSTYKTYTTANGCPFMKPEGPPADGRTLALNDHHLVESLAHFNREKIPERAVHAKGAAAYGEFEVTADISDICNIDMLLGVGKKTPCVTRFSTTGLERGSAEGMRDLKGMATKFYTKEGNWDWVCLNFPFFFIRDPLKFPSLMHAQRRDPRTNLLNPNMYWDWVTSNHESLHMVLLQFSDFGTMFNWRSLSGYMGHAYKWVMPNGSFKYVHIFLSSDRGPNFSQGEQAKDNSDLDPDHATRDLYEAIERGDYPTWTANVQVVDPAEAPDLGFNILDVTKHWNLGTYPKDLPKIPSRPFGKLTLNRIPDNFFAEVEQLAFSPSNMVPGVLPSEDPILQARMFAYPDAQRYRLGPNHHKIPVNQCPMTFNPTLRDGTGTFDANYGSLPGYVSESQGVNFARPQEHDPKFNAWLSQLSSRPWMQTNENDYKFPRDFYNALPEFRSQEFQDKMVENIIASVAQTRREIREKVYHTFHLVDPELSARVKRGVEKMDASFKQVSLSRL.

The active site involves histidine 71. Tyrosine 361 is a binding site for heme.

The protein belongs to the catalase family. Heme is required as a cofactor.

It participates in alkaloid biosynthesis; ergot alkaloid biosynthesis. Catalase; part of the gene cluster that mediates the biosynthesis of fumiclavanine C, a fungal ergot alkaloid. DmaW catalyzes the first step of ergot alkaloid biosynthesis by condensing dimethylallyl diphosphate (DMAP) and tryptophan to form 4-dimethylallyl-L-tryptophan. The second step is catalyzed by the methyltransferase easF that methylates 4-dimethylallyl-L-tryptophan in the presence of S-adenosyl-L-methionine, resulting in the formation of 4-dimethylallyl-L-abrine. The catalase easC and the FAD-dependent oxidoreductase easE then transform 4-dimethylallyl-L-abrine to chanoclavine-I which is further oxidized by EasD in the presence of NAD(+), resulting in the formation of chanoclavine-I aldehyde. EasA reduces chanoclavine-I aldehyde to dihydrochanoclavine-I aldehyde that spontaneously dehydrates to form 6,8-dimethyl-6,7-didehydroergoline. EasG then catalyzes the reduction of 6,8-dimethyl-6,7-didehydroergoline to form festuclavine. Hydrolysis of festuclavine by easM then leads to the formation of fumigaclavine B which is in turn acetylated by easN to fumigaclavine A. Finally, easL catalyzes the conversion of fumigaclavine A into fumigaclavine C by attaching a dimethylallyl moiety to C-2 of the indole nucleus. This chain is Catalase easC, found in Aspergillus fumigatus (strain ATCC MYA-4609 / CBS 101355 / FGSC A1100 / Af293) (Neosartorya fumigata).